Consider the following 119-residue polypeptide: Large ribosomal subunit protein uL18 (119 aa).

Belongs to the universal ribosomal protein uL18 family. In terms of assembly, part of the 50S ribosomal subunit; part of the 5S rRNA/L5/L18/L25 subcomplex. Contacts the 5S and 23S rRNAs.

In terms of biological role, this is one of the proteins that bind and probably mediate the attachment of the 5S RNA into the large ribosomal subunit, where it forms part of the central protuberance. The polypeptide is Large ribosomal subunit protein uL18 (Clostridium botulinum (strain Alaska E43 / Type E3)).